The primary structure comprises 389 residues: Probable serine/threonine-protein kinase PBL24 (389 aa).

The interval 1–36 (MSCFLGPSTNNKSRENEGSSMAAPYEQQNLPRNDRR) is disordered. A lipid anchor (S-palmitoyl cysteine) is attached at C3. The 278-residue stretch at 71-348 (FRQEFLIGEG…SDVVTALSFM (278 aa)) folds into the Protein kinase domain. Residues 77–85 (IGEGGFGRV) and K100 each bind ATP. The active-site Proton acceptor is D198. Residues S202 and S232 each carry the phosphoserine modification. At T238 the chain carries Phosphothreonine. Phosphotyrosine is present on Y246.

It belongs to the protein kinase superfamily. Ser/Thr protein kinase family.

The protein resides in the cell membrane. The catalysed reaction is L-seryl-[protein] + ATP = O-phospho-L-seryl-[protein] + ADP + H(+). It catalyses the reaction L-threonyl-[protein] + ATP = O-phospho-L-threonyl-[protein] + ADP + H(+). In terms of biological role, may be involved in plant defense signaling. The sequence is that of Probable serine/threonine-protein kinase PBL24 from Arabidopsis thaliana (Mouse-ear cress).